The chain runs to 442 residues: UDP-N-acetylmuramate--L-alanine ligase (442 aa).

109–115 (GAHGKTS) contributes to the ATP binding site.

This sequence belongs to the MurCDEF family.

The protein localises to the cytoplasm. The catalysed reaction is UDP-N-acetyl-alpha-D-muramate + L-alanine + ATP = UDP-N-acetyl-alpha-D-muramoyl-L-alanine + ADP + phosphate + H(+). The protein operates within cell wall biogenesis; peptidoglycan biosynthesis. Cell wall formation. This Streptococcus pyogenes serotype M18 (strain MGAS8232) protein is UDP-N-acetylmuramate--L-alanine ligase.